A 578-amino-acid polypeptide reads, in one-letter code: Proline--tRNA ligase (578 aa).

Belongs to the class-II aminoacyl-tRNA synthetase family. ProS type 1 subfamily. As to quaternary structure, homodimer.

Its subcellular location is the cytoplasm. It carries out the reaction tRNA(Pro) + L-proline + ATP = L-prolyl-tRNA(Pro) + AMP + diphosphate. Catalyzes the attachment of proline to tRNA(Pro) in a two-step reaction: proline is first activated by ATP to form Pro-AMP and then transferred to the acceptor end of tRNA(Pro). As ProRS can inadvertently accommodate and process non-cognate amino acids such as alanine and cysteine, to avoid such errors it has two additional distinct editing activities against alanine. One activity is designated as 'pretransfer' editing and involves the tRNA(Pro)-independent hydrolysis of activated Ala-AMP. The other activity is designated 'posttransfer' editing and involves deacylation of mischarged Ala-tRNA(Pro). The misacylated Cys-tRNA(Pro) is not edited by ProRS. This is Proline--tRNA ligase from Burkholderia pseudomallei (strain 668).